We begin with the raw amino-acid sequence, 327 residues long: Regulatory protein MsrR (327 aa).

The span at 1–18 (MDKETNDNEYRRQSEHRT) shows a compositional bias: basic and acidic residues. Residues 1–24 (MDKETNDNEYRRQSEHRTSAPKRK) are disordered. Over 1–31 (MDKETNDNEYRRQSEHRTSAPKRKKKKKIRK) the chain is Cytoplasmic. Residues 32-52 (LPIILLIVVILLIALVVYIVH) traverse the membrane as a helical; Signal-anchor for type II membrane protein segment. Topologically, residues 53–327 (SYNSGVEYAK…QAIKDFLDED (275 aa)) are extracellular.

Belongs to the LytR/CpsA/Psr (LCP) family.

The protein localises to the cell membrane. Its function is as follows. Involved in SarA attenuation. Affects resistance to oxacillin and teicoplanin, as well as the synthesis of virulence factors. In Staphylococcus aureus (strain NCTC 8325 / PS 47), this protein is Regulatory protein MsrR (msrR).